Consider the following 207-residue polypeptide: Ribosome maturation factor RimP (207 aa).

The tract at residues Arg-171 to His-207 is disordered. Residues Lys-197–His-207 show a composition bias toward basic residues.

It belongs to the RimP family.

The protein localises to the cytoplasm. Required for maturation of 30S ribosomal subunits. The polypeptide is Ribosome maturation factor RimP (Gluconacetobacter diazotrophicus (strain ATCC 49037 / DSM 5601 / CCUG 37298 / CIP 103539 / LMG 7603 / PAl5)).